Reading from the N-terminus, the 377-residue chain is Chorismate synthase (377 aa).

The NADP(+) site is built by Arg48 and Arg54. FMN contacts are provided by residues 125 to 127 (RSS), 238 to 239 (NA), Gly278, 293 to 297 (KPTSS), and Arg319.

Belongs to the chorismate synthase family. In terms of assembly, homotetramer. FMNH2 serves as cofactor.

The catalysed reaction is 5-O-(1-carboxyvinyl)-3-phosphoshikimate = chorismate + phosphate. Its pathway is metabolic intermediate biosynthesis; chorismate biosynthesis; chorismate from D-erythrose 4-phosphate and phosphoenolpyruvate: step 7/7. In terms of biological role, catalyzes the anti-1,4-elimination of the C-3 phosphate and the C-6 proR hydrogen from 5-enolpyruvylshikimate-3-phosphate (EPSP) to yield chorismate, which is the branch point compound that serves as the starting substrate for the three terminal pathways of aromatic amino acid biosynthesis. This reaction introduces a second double bond into the aromatic ring system. The sequence is that of Chorismate synthase from Aromatoleum aromaticum (strain DSM 19018 / LMG 30748 / EbN1) (Azoarcus sp. (strain EbN1)).